The primary structure comprises 403 residues: 8-amino-7-oxononanoate synthase (403 aa).

Arg22 lines the substrate pocket. Residue 109 to 110 (GF) coordinates pyridoxal 5'-phosphate. His134 is a binding site for substrate. Pyridoxal 5'-phosphate contacts are provided by Ser178, His206, and Thr232. Lys235 is subject to N6-(pyridoxal phosphate)lysine. Thr348 is a binding site for substrate. The segment at 383–403 (SNDSGSKPSIESSFELKKEAQ) is disordered. The segment covering 385 to 394 (DSGSKPSIES) has biased composition (polar residues).

This sequence belongs to the class-II pyridoxal-phosphate-dependent aminotransferase family. BioF subfamily. In terms of assembly, homodimer. Requires pyridoxal 5'-phosphate as cofactor.

It catalyses the reaction 6-carboxyhexanoyl-[ACP] + L-alanine + H(+) = (8S)-8-amino-7-oxononanoate + holo-[ACP] + CO2. It functions in the pathway cofactor biosynthesis; biotin biosynthesis. Its function is as follows. Catalyzes the decarboxylative condensation of pimeloyl-[acyl-carrier protein] and L-alanine to produce 8-amino-7-oxononanoate (AON), [acyl-carrier protein], and carbon dioxide. This is 8-amino-7-oxononanoate synthase from Vibrio atlanticus (strain LGP32) (Vibrio splendidus (strain Mel32)).